The following is a 357-amino-acid chain: Putative electron transport protein YccM (357 aa).

Topologically, residues 1–36 are cytoplasmic; that stretch reads MAENKRTRWQRRPGTTGGKLPWNDWRNATTWRKATQ. The chain crosses the membrane as a helical span at residues 37-54; the sequence is LLLLAMNIYIAITFWYWV. Residues 55-91 lie on the Periplasmic side of the membrane; sequence RYYETASSTTFVARPGGIEGWLPIAGLMNLKYSLVTG. The chain crosses the membrane as a helical span at residues 92–114; it reads QLPSVHAAAMLLLVAFIVISLLL. At 115–158 the chain is on the cytoplasmic side; it reads KKAFCSWLCPVGTLSELIGDLGNKLFGRQCVLPRWLDIPLRGVK. A helical transmembrane segment spans residues 159–181; the sequence is YLLLSFFIYIALLMPAQAIHYFM. Residues 182 to 195 lie on the Periplasmic side of the membrane; the sequence is LSPYSVVMDVKMLD. The chain crosses the membrane as a helical span at residues 196 to 218; it reads FFRHMGTATLISVTVLLIASLFI. Topologically, residues 219-309 are cytoplasmic; the sequence is RHAWCRYLCP…KPAANKKAFA (91 aa). 4Fe-4S ferredoxin-type domains lie at 242–270 and 269–299; these read FKIRRNAESCIDCGKCAKNCPSRIPVDKL and KLIQVRTVECTGCMTCVESCPVASTLTFSLQ. Residues cysteine 251, cysteine 254, cysteine 257, cysteine 261, cysteine 278, cysteine 281, cysteine 284, and cysteine 288 each contribute to the [4Fe-4S] cluster site. The chain crosses the membrane as a helical span at residues 310–332; the sequence is LSGWLMTLLVLGIMFAVIGYAMY. Topologically, residues 333-357 are periplasmic; that stretch reads AGVWQSPVPEELYRRLIPQAPMIGH.

Its subcellular location is the cell inner membrane. The protein is Putative electron transport protein YccM (yccM) of Escherichia coli (strain K12).